A 505-amino-acid polypeptide reads, in one-letter code: Exodeoxyribonuclease 7 large subunit (505 aa).

The segment at Ser466–Phe505 is disordered. The span at Ala480–Pro497 shows a compositional bias: pro residues.

Belongs to the XseA family. In terms of assembly, heterooligomer composed of large and small subunits.

Its subcellular location is the cytoplasm. The enzyme catalyses Exonucleolytic cleavage in either 5'- to 3'- or 3'- to 5'-direction to yield nucleoside 5'-phosphates.. Its function is as follows. Bidirectionally degrades single-stranded DNA into large acid-insoluble oligonucleotides, which are then degraded further into small acid-soluble oligonucleotides. In Caulobacter vibrioides (strain NA1000 / CB15N) (Caulobacter crescentus), this protein is Exodeoxyribonuclease 7 large subunit.